A 283-amino-acid polypeptide reads, in one-letter code: Thymidylate synthase (283 aa).

Residue arginine 33 coordinates dUMP. Residue histidine 63 participates in (6R)-5,10-methylene-5,6,7,8-tetrahydrofolate binding. 138 to 139 is a binding site for dUMP; the sequence is RR. Cysteine 158 serves as the catalytic Nucleophile. DUMP contacts are provided by residues 185–188, asparagine 196, and 226–228; these read RSAD and HIY. Aspartate 188 provides a ligand contact to (6R)-5,10-methylene-5,6,7,8-tetrahydrofolate. Alanine 282 serves as a coordination point for (6R)-5,10-methylene-5,6,7,8-tetrahydrofolate.

Belongs to the thymidylate synthase family. Bacterial-type ThyA subfamily. In terms of assembly, homodimer.

Its subcellular location is the cytoplasm. The enzyme catalyses dUMP + (6R)-5,10-methylene-5,6,7,8-tetrahydrofolate = 7,8-dihydrofolate + dTMP. The protein operates within pyrimidine metabolism; dTTP biosynthesis. In terms of biological role, catalyzes the reductive methylation of 2'-deoxyuridine-5'-monophosphate (dUMP) to 2'-deoxythymidine-5'-monophosphate (dTMP) while utilizing 5,10-methylenetetrahydrofolate (mTHF) as the methyl donor and reductant in the reaction, yielding dihydrofolate (DHF) as a by-product. This enzymatic reaction provides an intracellular de novo source of dTMP, an essential precursor for DNA biosynthesis. The polypeptide is Thymidylate synthase (Methylibium petroleiphilum (strain ATCC BAA-1232 / LMG 22953 / PM1)).